The following is a 352-amino-acid chain: Biotin synthase (352 aa).

The 219-residue stretch at N44–K262 folds into the Radical SAM core domain. 3 residues coordinate [4Fe-4S] cluster: C59, C63, and C66. C103, C134, C194, and R266 together coordinate [2Fe-2S] cluster.

Belongs to the radical SAM superfamily. Biotin synthase family. As to quaternary structure, homodimer. The cofactor is [4Fe-4S] cluster. Requires [2Fe-2S] cluster as cofactor.

It catalyses the reaction (4R,5S)-dethiobiotin + (sulfur carrier)-SH + 2 reduced [2Fe-2S]-[ferredoxin] + 2 S-adenosyl-L-methionine = (sulfur carrier)-H + biotin + 2 5'-deoxyadenosine + 2 L-methionine + 2 oxidized [2Fe-2S]-[ferredoxin]. The protein operates within cofactor biosynthesis; biotin biosynthesis; biotin from 7,8-diaminononanoate: step 2/2. Catalyzes the conversion of dethiobiotin (DTB) to biotin by the insertion of a sulfur atom into dethiobiotin via a radical-based mechanism. This is Biotin synthase from Pseudomonas syringae pv. syringae (strain B728a).